Consider the following 384-residue polypeptide: Sensor-like histidine kinase SenX3 (384 aa).

The Histidine kinase domain occupies 153–369; the sequence is NVSHELKTPV…TFTLSIPEYP (217 aa). His-156 carries the phosphohistidine; by autocatalysis modification. The tract at residues 360–384 is disordered; sequence TFTLSIPEYPDPESHSDEREDQRER. The span at 371-384 shows a compositional bias: basic and acidic residues; it reads PESHSDEREDQRER.

Autophosphorylated.

The protein localises to the cell membrane. It catalyses the reaction ATP + protein L-histidine = ADP + protein N-phospho-L-histidine.. Functionally, member of the two-component regulatory system SenX3/RegX3 involved in stress response. The system is involved in phosphate starvation response. Probably exhibits a dual role as a phosphatase or a phosphodonor for the response regulator RegX3, depending upon phosphate availability. When environmental phosphate is abundant, SenX3 is required to maintain RegX3 in an unphosphorylated state, where it is unable to bind target DNA. Under conditions of phosphate limitation, SenX3 autophosphorylates and then transfers the phosphate group to RegX3. Probably does not itself sense phosphate concentrations, which may be relayed to SenX3 by the PstSCAB phosphate transporter system. In Mycolicibacterium smegmatis (strain ATCC 700084 / mc(2)155) (Mycobacterium smegmatis), this protein is Sensor-like histidine kinase SenX3.